Reading from the N-terminus, the 513-residue chain is Histidine ammonia-lyase (513 aa).

Residues 144-146 (ASG) constitute a cross-link (5-imidazolinone (Ala-Gly)). S145 carries the 2,3-didehydroalanine (Ser) modification.

The protein belongs to the PAL/histidase family. Contains an active site 4-methylidene-imidazol-5-one (MIO), which is formed autocatalytically by cyclization and dehydration of residues Ala-Ser-Gly.

The protein localises to the cytoplasm. The catalysed reaction is L-histidine = trans-urocanate + NH4(+). The protein operates within amino-acid degradation; L-histidine degradation into L-glutamate; N-formimidoyl-L-glutamate from L-histidine: step 1/3. This Streptococcus pyogenes serotype M49 (strain NZ131) protein is Histidine ammonia-lyase.